The chain runs to 100 residues: Aspartyl/glutamyl-tRNA(Asn/Gln) amidotransferase subunit C (100 aa).

It belongs to the GatC family. In terms of assembly, heterotrimer of A, B and C subunits.

It carries out the reaction L-glutamyl-tRNA(Gln) + L-glutamine + ATP + H2O = L-glutaminyl-tRNA(Gln) + L-glutamate + ADP + phosphate + H(+). The catalysed reaction is L-aspartyl-tRNA(Asn) + L-glutamine + ATP + H2O = L-asparaginyl-tRNA(Asn) + L-glutamate + ADP + phosphate + 2 H(+). Functionally, allows the formation of correctly charged Asn-tRNA(Asn) or Gln-tRNA(Gln) through the transamidation of misacylated Asp-tRNA(Asn) or Glu-tRNA(Gln) in organisms which lack either or both of asparaginyl-tRNA or glutaminyl-tRNA synthetases. The reaction takes place in the presence of glutamine and ATP through an activated phospho-Asp-tRNA(Asn) or phospho-Glu-tRNA(Gln). The chain is Aspartyl/glutamyl-tRNA(Asn/Gln) amidotransferase subunit C from Streptococcus agalactiae serotype Ia (strain ATCC 27591 / A909 / CDC SS700).